The primary structure comprises 132 residues: Agouti-signaling protein (132 aa).

A signal peptide spans 1-22; the sequence is MDVTRLLLATLLVFLCFFTVYS. N-linked (GlcNAc...) asparagine glycosylation is present at Asn-39. Positions 61–87 are disordered; that stretch reads HISRKEAEKKRSSKKEASMKKVARPRT. Over residues 64–79 the composition is skewed to basic and acidic residues; that stretch reads RKEAEKKRSSKKEASM. 5 disulfides stabilise this stretch: Cys-93–Cys-108, Cys-100–Cys-114, Cys-107–Cys-125, Cys-111–Cys-132, and Cys-116–Cys-123. Positions 93–132 constitute an Agouti domain; sequence CVATRDSCKPPAPACCDPCASCQCRFFRSACSCRVLSLNC.

Its subcellular location is the secreted. Its function is as follows. Involved in the regulation of melanogenesis. The binding of ASP to MC1R precludes alpha-MSH initiated signaling and thus blocks production of cAMP, leading to a down-regulation of eumelanogenesis (brown/black pigment) and thus increasing synthesis of pheomelanin (yellow/red pigment). This Colobus polykomos (Western black-and-white colobus monkey) protein is Agouti-signaling protein (ASIP).